A 276-amino-acid chain; its full sequence is MELRAFVEITRPHNCALAGLVGVLGSMVALGSVPEGKILILVFLVVSLGCAGGNTINDYFDYEIDRINRPERPLPRGAMDRRTALWYSLFLFAVGLALALLISLKAFAFALLAYITMFLYAWKLKPLPFIGNIAVAALTGVTPLYGAIAVGKIGLAGTLAVCAFLVNVAREIVKDIEDVEGDLKKGAKTLPIILGRRKAAYVAAFFGVATVIASFLPVKAGVGVGYYAMVPVDLIILYAVYLILRNQDEKTAHRSQLLLKASIFLAVFAFLIAALM.

8 consecutive transmembrane segments (helical) span residues 12–34 (PHNC…GSVP), 38–60 (ILIL…NDYF), 84–104 (ALWY…LISL), 107–127 (FAFA…LKPL), 146–166 (GAIA…AFLV), 202–222 (VAAF…KAGV), 224–244 (VGYY…YLIL), and 256–276 (QLLL…AALM).

It belongs to the UbiA prenyltransferase family. DGGGP synthase subfamily. Mg(2+) serves as cofactor.

It localises to the cell membrane. The catalysed reaction is sn-3-O-(geranylgeranyl)glycerol 1-phosphate + (2E,6E,10E)-geranylgeranyl diphosphate = 2,3-bis-O-(geranylgeranyl)-sn-glycerol 1-phosphate + diphosphate. It participates in membrane lipid metabolism; glycerophospholipid metabolism. In terms of biological role, prenyltransferase that catalyzes the transfer of the geranylgeranyl moiety of geranylgeranyl diphosphate (GGPP) to the C2 hydroxyl of (S)-3-O-geranylgeranylglyceryl phosphate (GGGP). This reaction is the second ether-bond-formation step in the biosynthesis of archaeal membrane lipids. This Thermococcus gammatolerans (strain DSM 15229 / JCM 11827 / EJ3) protein is Digeranylgeranylglyceryl phosphate synthase.